Consider the following 161-residue polypeptide: Phosphopantetheine adenylyltransferase (161 aa).

Substrate is bound at residue Ser-9. Residues 9-10 (SF) and His-17 each bind ATP. Substrate-binding residues include Lys-41, Thr-73, and Arg-87. Residues 88-90 (GIR), Glu-98, and 123-129 (YQYVSSS) contribute to the ATP site.

This sequence belongs to the bacterial CoaD family. In terms of assembly, homohexamer. It depends on Mg(2+) as a cofactor.

The protein localises to the cytoplasm. The enzyme catalyses (R)-4'-phosphopantetheine + ATP + H(+) = 3'-dephospho-CoA + diphosphate. It participates in cofactor biosynthesis; coenzyme A biosynthesis; CoA from (R)-pantothenate: step 4/5. Functionally, reversibly transfers an adenylyl group from ATP to 4'-phosphopantetheine, yielding dephospho-CoA (dPCoA) and pyrophosphate. This Levilactobacillus brevis (strain ATCC 367 / BCRC 12310 / CIP 105137 / JCM 1170 / LMG 11437 / NCIMB 947 / NCTC 947) (Lactobacillus brevis) protein is Phosphopantetheine adenylyltransferase.